Here is a 496-residue protein sequence, read N- to C-terminus: Acyltransferase M4 (496 aa).

His163 functions as the Proton acceptor in the catalytic mechanism.

The protein belongs to the plant acyltransferase family. Monomer.

It functions in the pathway secondary metabolite biosynthesis. In terms of biological role, acyltransferase; part of the gene cluster that mediates the biosynthesis of squalestatin S1 (SQS1, also known as zaragozic acid A), a heavily oxidized fungal polyketide that offers potent cholesterol lowering activity by targeting squalene synthase (SS). SQS1 is composed of a 2,8-dioxobicyclic[3.2.1]octane-3,4,5-tricarboxyclic acid core that is connected to two lipophilic polyketide arms. These initial steps feature the priming of an unusual benzoic acid starter unit onto the highly reducing polyketide synthase pks2, followed by oxaloacetate extension and product release to generate a tricarboxylic acid containing product. The phenylalanine ammonia lyase (PAL) M7 and the acyl-CoA ligase M9 are involved in transforming phenylalanine into benzoyl-CoA. The citrate synthase-like protein R3 is involved in connecting the C-alpha-carbons of the hexaketide chain and oxaloacetate to afford the tricarboxylic acid unit. The potential hydrolytic enzymes, M8 and M10, are in close proximity to pks2 and may participate in product release. On the other side, the tetraketide arm is synthesized by a the squalestatin tetraketide synthase pks1 and enzymatically esterified to the core in the last biosynthetic step, by the acetyltransferase M4. The biosynthesis of the tetraketide must involve 3 rounds of chain extension. After the first and second rounds methyl-transfer occurs, and in all rounds of extension the ketoreductase and dehydratase are active. The enoyl reductase and C-MeT of pks1 are not active in the final round of extension. The acetyltransferase M4 appears to have a broad substrate selectivity for its acyl CoA substrate, allowing the in vitro synthesis of novel squalestatins. The biosynthesis of SQS1 requires several oxidative steps likely performed by oxidoreductases M1, R1 and R2. Finally, in support of the identification of the cluster as being responsible for SQS1 production, the cluster contains a gene encoding a putative squalene synthase (SS) R6, suggesting a likely mechanism for self-resistance. The protein is Acyltransferase M4 of Phoma sp. (strain ATCC 20986 / MF5453).